A 369-amino-acid chain; its full sequence is Alanine racemase (369 aa).

The active-site Proton acceptor; specific for D-alanine is the lysine 35. Lysine 35 carries the post-translational modification N6-(pyridoxal phosphate)lysine. Arginine 130 is a substrate binding site. Tyrosine 257 functions as the Proton acceptor; specific for L-alanine in the catalytic mechanism. Methionine 305 provides a ligand contact to substrate.

It belongs to the alanine racemase family. Requires pyridoxal 5'-phosphate as cofactor.

It carries out the reaction L-alanine = D-alanine. Its pathway is amino-acid biosynthesis; D-alanine biosynthesis; D-alanine from L-alanine: step 1/1. Its function is as follows. Catalyzes the interconversion of L-alanine and D-alanine. May also act on other amino acids. The polypeptide is Alanine racemase (alr) (Paracidovorax citrulli (strain AAC00-1) (Acidovorax citrulli)).